Consider the following 142-residue polypeptide: Probable transport accessory protein MmpS5 (142 aa).

Residues 7–26 (RAWIPLLILVVVAIAGFTVQ) traverse the membrane as a helical segment.

Belongs to the MmpS family.

It localises to the cell membrane. This is Probable transport accessory protein MmpS5 (mmpS5) from Mycobacterium bovis (strain ATCC BAA-935 / AF2122/97).